A 248-amino-acid polypeptide reads, in one-letter code: Probable transcriptional regulatory protein M446_6579 (248 aa).

This sequence belongs to the TACO1 family.

The protein resides in the cytoplasm. The protein is Probable transcriptional regulatory protein M446_6579 of Methylobacterium sp. (strain 4-46).